The following is a 314-amino-acid chain: Protein EXORDIUM (314 aa).

The N-terminal stretch at 1–21 is a signal peptide; sequence MYLLVFKLFLFLSLLQISVSA.

The protein belongs to the EXORDIUM family. Expressed in root tips, vascular tissue of roots, shoot apex, rosette leaves and embryos.

It localises to the secreted. It is found in the extracellular space. Its subcellular location is the apoplast. In terms of biological role, required for cell expansion in leaves. May mediate brassinosteroid (BR)-induced leaf growth. May play a role in the control of BR responses in roots. May be involved in signaling processes that coordinate BR responses with environmental or developmental signals. The chain is Protein EXORDIUM (EXO) from Arabidopsis thaliana (Mouse-ear cress).